The sequence spans 103 residues: Large ribosomal subunit protein bL21 (103 aa).

It belongs to the bacterial ribosomal protein bL21 family. Part of the 50S ribosomal subunit. Contacts protein L20.

In terms of biological role, this protein binds to 23S rRNA in the presence of protein L20. The polypeptide is Large ribosomal subunit protein bL21 (Pseudomonas paraeruginosa (strain DSM 24068 / PA7) (Pseudomonas aeruginosa (strain PA7))).